Here is a 575-residue protein sequence, read N- to C-terminus: Cyclic nucleotide-gated channel alpha-4 (575 aa).

At 1–38 the chain is on the cytoplasmic side; the sequence is MSQDSKVKTTESTPPAPTKARKWLPVLDPSGDYYYWWL. A helical membrane pass occupies residues 39 to 60; it reads NTMVFPIMYNLIIVVCRACFPD. The Extracellular segment spans residues 61 to 70; that stretch reads LQHSYLVAWF. Residues 71–91 traverse the membrane as a helical segment; sequence VLDYTSDLLYLLDIGVRFHTG. The Cytoplasmic portion of the chain corresponds to 92-116; the sequence is FLEQGILVVDKSMIASRYVRTWSFL. A helical transmembrane segment spans residues 117-135; sequence LDLASLVPTDAAYVQLGPH. Over 136–140 the chain is Extracellular; that stretch reads IPTLR. Residues 141-159 form a helical membrane-spanning segment; sequence LNRFLRVPRLFEAFDRTET. Topologically, residues 160–166 are cytoplasmic; the sequence is RTAYPNA. Residues 164-272 form an ion conduction pathway region; sequence PNAFRIAKLM…GSMSSVIYNM (109 aa). Residues 167–190 form a helical membrane-spanning segment; it reads FRIAKLMIYIFVVIHWNSCLYFAL. Topologically, residues 191 to 213 are extracellular; the sequence is SRYLGFGRDAWVYPDPAQPGFER. 2 helical membrane passes run 214-248 and 249-273; these read LRRQYLYSFYFSTLILTTVGDTPLPAREEEYLFMV and GDFLLAVMGFATIMGSMSSVIYNMN. The interval 231-234 is selectivity filter; that stretch reads TVGD. The segment at 274 to 350 is C-linker; sequence TADAAFYPDH…STLSRVQIFQ (77 aa). Over 274-575 the chain is Cytoplasmic; it reads TADAAFYPDH…AGQEGPSGLE (302 aa). Positions 292–302 match the IQ-type motif; sequence LQHVNRRLERR. Residue 348-471 coordinates a nucleoside 3',5'-cyclic phosphate; it reads IFQNCEASLL…AVMEEKGREI (124 aa). The cyclic nucleotide-binding domain stretch occupies residues 354-474; it reads ASLLEELVLK…EEKGREILLK (121 aa). Residues Gly414, Ser417, Arg430, and Thr431 each contribute to the 3',5'-cyclic GMP site. 2 residues coordinate 3',5'-cyclic AMP: Arg430 and Thr431. Residues 493-547 adopt a coiled-coil conformation; sequence TESRLKGLDQQLDDLQTKFARLLAELESSALKIAYRIERLEWQTREWPMPDDMGE. The tract at residues 536–575 is disordered; the sequence is TREWPMPDDMGEADDEAEPGEGTSKDGEEKAGQEGPSGLE. A compositionally biased stretch (acidic residues) spans 544 to 554; sequence DMGEADDEAEP. A compositionally biased stretch (basic and acidic residues) spans 558–567; it reads TSKDGEEKAG.

This sequence belongs to the cyclic nucleotide-gated cation channel (TC 1.A.1.5) family. CNGA4 subfamily. As to quaternary structure, the olfactory cyclic nucleotide-gated channel is an heterotetramer composed of CNGA2, CNGA4 and CNGB1b subunits with 2:1:1 stoichiometry. Expressed in the olfactory epithelium.

It localises to the cell projection. Its subcellular location is the cilium membrane. The enzyme catalyses Ca(2+)(in) = Ca(2+)(out). It carries out the reaction Na(+)(in) = Na(+)(out). The catalysed reaction is K(+)(in) = K(+)(out). It catalyses the reaction NH4(+)(in) = NH4(+)(out). The enzyme catalyses Rb(+)(in) = Rb(+)(out). It carries out the reaction Li(+)(in) = Li(+)(out). The catalysed reaction is Cs(+)(in) = Cs(+)(out). Ca(2+)-calmodulin exerts its inhibitory effect in cAMP sensitivity by binding to IQ-like motif of CNGA4 and preferably binds to the channel in the closed state. Inhibition by PIP3 of the CNG channel probably occurs via CGNA2 binding. In terms of biological role, pore-forming subunit of the olfactory cyclic nucleotide-gated channel. Operates in the cilia of olfactory sensory neurons where chemical stimulation of the odorant is converted to an electrical signal. Mediates odorant-induced cAMP-dependent Ca(2+) influx triggering neuron depolarization. The rise of intracellular Ca(2+) levels potentiates the olfactory response by activating Ca(2+)-dependent Cl(-) channels, but it also serves as a negative feedback signal to desensitize the channel for rapid adaptation to odorants. Conducts cGMP- and cAMP-gated ion currents, with permeability for monovalent and divalent cations. Conducts cAMP- and cGMP-gated ion currents, with permeability for monovalent and divalent cations. May conduct nitric oxide-gated Ca(2+) currents relevant to neurons of vomeronasal organ, a system involved in the perception of pheromones. The sequence is that of Cyclic nucleotide-gated channel alpha-4 from Mus musculus (Mouse).